Reading from the N-terminus, the 495-residue chain is uncharacterized protein (495 aa).

The span at 305–317 (DYNNNNNENYSGS) shows a compositional bias: low complexity. The tract at residues 305-404 (DYNNNNNENY…LDEEDNRKNK (100 aa)) is disordered. Over residues 335 to 347 (YDNDENNDDENND) the composition is skewed to acidic residues. A compositionally biased stretch (low complexity) spans 348 to 363 (ENNNNNNNNNNNNNNN). Residues 386 to 398 (SDDDEADNELDEE) are compositionally biased toward acidic residues.

This is an uncharacterized protein from Dictyostelium discoideum (Social amoeba).